The chain runs to 281 residues: Probable endonuclease 4 (281 aa).

Residues histidine 68, histidine 108, glutamate 145, aspartate 179, histidine 182, histidine 216, aspartate 229, histidine 231, and glutamate 261 each coordinate Zn(2+).

The protein belongs to the AP endonuclease 2 family. The cofactor is Zn(2+).

The catalysed reaction is Endonucleolytic cleavage to 5'-phosphooligonucleotide end-products.. Functionally, endonuclease IV plays a role in DNA repair. It cleaves phosphodiester bonds at apurinic or apyrimidinic (AP) sites, generating a 3'-hydroxyl group and a 5'-terminal sugar phosphate. This chain is Probable endonuclease 4, found in Trichlorobacter lovleyi (strain ATCC BAA-1151 / DSM 17278 / SZ) (Geobacter lovleyi).